We begin with the raw amino-acid sequence, 105 residues long: Heat shock protein HspQ (105 aa).

It belongs to the HspQ family.

It localises to the cytoplasm. Involved in the degradation of certain denaturated proteins, including DnaA, during heat shock stress. In Blochmanniella floridana, this protein is Heat shock protein HspQ.